The following is a 140-amino-acid chain: Ribosome maturation factor RimP (140 aa).

Belongs to the RimP family.

The protein localises to the cytoplasm. Its function is as follows. Required for maturation of 30S ribosomal subunits. The sequence is that of Ribosome maturation factor RimP from Campylobacter jejuni subsp. jejuni serotype O:6 (strain 81116 / NCTC 11828).